Reading from the N-terminus, the 214-residue chain is Thymidylate kinase (214 aa).

7-14 (GIEGAGKT) is a binding site for ATP.

This sequence belongs to the thymidylate kinase family.

The catalysed reaction is dTMP + ATP = dTDP + ADP. Functionally, phosphorylation of dTMP to form dTDP in both de novo and salvage pathways of dTTP synthesis. This is Thymidylate kinase from Desulfosudis oleivorans (strain DSM 6200 / JCM 39069 / Hxd3) (Desulfococcus oleovorans).